The following is an 832-amino-acid chain: Mechanosensitive cation channel TMEM63B (832 aa).

Residues 1–40 (MLPFLLATLGTAALNSSNPKDYCYSARIRSTVLQGLPFGG) are Extracellular-facing. Residues 41-65 (VPTVLALDFMCFLALLFLFSILRKV) traverse the membrane as a helical segment. C51 carries S-palmitoyl cysteine lipidation. Topologically, residues 66-145 (AWDYGRLALV…KDDEIRDKCG (80 aa)) are cytoplasmic. Residues 86-88 (RER) carry the Mediates endoplasmic reticulum retention motif. S111, S113, S114, and S115 each carry phosphoserine. C126 carries S-palmitoyl cysteine lipidation. The helical transmembrane segment at 146-178 (GDAVHYLSFQRHIIGLLVVVGVLSVGIVLPVNF) threads the bilayer. The Extracellular segment spans residues 179-202 (SGDLLENNAYSFGRTTIANLKSGN). The chain crosses the membrane as a helical span at residues 203 to 227 (NLLWLHTSFAFLYLLLTVYSMRRHT). The Cytoplasmic portion of the chain corresponds to 228 to 427 (SKMRYKEDDL…IYWEHLSIRG (200 aa)). An intracellular linker IL2; confers mechanosensitivity region spans residues 231-426 (RYKEDDLVKR…NIYWEHLSIR (196 aa)). 2 S-palmitoyl cysteine lipidation sites follow: C382 and C398. A helical transmembrane segment spans residues 428 to 457 (FIWWLRCLVINVVLFILLFFLTTPAIIITT). Topologically, residues 458–472 (MDKFNVTKPVEYLNN) are extracellular. N-linked (GlcNAc...) asparagine glycosylation occurs at N462. A helical transmembrane segment spans residues 473–502 (PIITQFFPTLLLWCFSALLPTIVYYSAFFE). Topologically, residues 503–506 (AHWT) are cytoplasmic. The helical transmembrane segment at 507-543 (RSGENRTTMHKCYTFLIFMVLLLPSLGLSSLDLFFRW) threads the bilayer. Residues 544–566 (LFDKKFLAEAAIRFECVFLPDNG) are Extracellular-facing. Residues 567-599 (AFFVNYVIASAFIGNAMDLLRIPGLLMYMIRLC) form a helical membrane-spanning segment. The segment at 567–599 (AFFVNYVIASAFIGNAMDLLRIPGLLMYMIRLC) is gating helix. The Cytoplasmic segment spans residues 600–619 (LARSAAERRNVKRHQAYEFQ). The chain crosses the membrane as a helical span at residues 620–638 (FGAAYAWMMCVFTVVMTYS). Residues 639–641 (ITC) are Extracellular-facing. A helical membrane pass occupies residues 642-666 (PIIVPFGLMYMLLKHLVDRYNLYYA). Over 667–673 (YLPAKLD) the chain is Cytoplasmic. Residues 674-702 (KKIHSGAVNQVVAAPILCLFWLLFFSTMR) traverse the membrane as a helical segment. Topologically, residues 703–707 (TGFLA) are extracellular. The helical transmembrane segment at 708–728 (PTSMFTFVVLVITIVICLCHV) threads the bilayer. S-palmitoyl cysteine attachment occurs at residues C726 and C729. Residues 729-832 (CFGHFKYLSA…DSLIENEIHQ (104 aa)) are Cytoplasmic-facing. 2 disordered regions span residues 748–767 (TDAV…AVPK) and 776–818 (LQDS…DTDF). Polar residues predominate over residues 749 to 758 (DAVSSRSNGR). A compositionally biased stretch (low complexity) spans 789-801 (PGSSGDEPPSSSS).

It belongs to the CSC1 (TC 1.A.17) family. In terms of assembly, monomer. Interacts with SLC19A2; interaction is required for the phospholipid scramblase activity. Palmitoylation is required for localization to the plasma membrane and stability. In terms of tissue distribution, expressed in cochlear hair cells (at protein level). Highly expressed in the subfornical organ of the brain. Expressed in small intestine. Brain-specific.

The protein resides in the cell membrane. The protein localises to the endoplasmic reticulum membrane. Its subcellular location is the lysosome membrane. It localises to the early endosome membrane. The catalysed reaction is Ca(2+)(in) = Ca(2+)(out). It carries out the reaction Mg(2+)(in) = Mg(2+)(out). It catalyses the reaction K(+)(in) = K(+)(out). The enzyme catalyses Na(+)(in) = Na(+)(out). The catalysed reaction is Cs(+)(in) = Cs(+)(out). It carries out the reaction a 1,2-diacyl-sn-glycero-3-phosphocholine(in) = a 1,2-diacyl-sn-glycero-3-phosphocholine(out). It catalyses the reaction a sphingomyelin(in) = a sphingomyelin(out). Mechanosensitive cation channel with low conductance and high activation threshold. Osmosensitive cation channel preferentially activated by hypotonic stress. Also acts as a phospholipid scramblase in response to changes in membrane structure: upon changes in membrane curvature and thickness, alters its conformation and translocates phospholipids, such as phosphatidylcholine and sphingomyelin, thereby controlling plasma membrane lipid distribution. Forms a heterodimer with SLC19A2, which mediates phospholipid scramblase activity following Ca(2+) stimulation. Expressed in excitatory neurons of the subfornical organ and functions as a thirst receptor that mediates neuronal response to hyperosmolality to drive thirst and drinking behavior. Facilitates intestinal motility by promoting proliferation of intestinal stem cells. Essential for the baby's first breath and respiration throughout life. Upon lung inflation conducts cation currents in alveolar type 1 and 2 cells triggering lamellar body exocytosis and surfactant secretion into airspace. Acts as an osmosensor in cochlear outer hair cells (OHCs) where it mediates calcium influx and regulatory volume decrease response. Required for the maintenance of OHC morphology, OHC survival and normal hearing. Its function is as follows. Brain-specific osmosensitive calcium channel isoform. This chain is Mechanosensitive cation channel TMEM63B, found in Mus musculus (Mouse).